The primary structure comprises 201 residues: Ran-specific GTPase-activating protein 1 (201 aa).

Composition is skewed to basic and acidic residues over residues 1-17 and 32-66; these read MSSE…EEAA and KKAE…IHFE. The tract at residues 1–66 is disordered; that stretch reads MSSEDKKPVV…APESPDIHFE (66 aa). The residue at position 60 (serine 60) is a Phosphoserine. The RanBD1 domain maps to 64-200; that stretch reads HFEPVVHLEK…FEKAQEINKK (137 aa).

The protein belongs to the RANBP1 family. In terms of assembly, interacts with GSP1 and PRP20.

The protein localises to the cytoplasm. The protein resides in the nucleus. Its function is as follows. Important for the export of protein containing nuclear export signal (NES) out of the nucleus. Stimulates the GTPase activity of GSP1 and GSP2. This is Ran-specific GTPase-activating protein 1 (YRB1) from Saccharomyces cerevisiae (strain ATCC 204508 / S288c) (Baker's yeast).